The primary structure comprises 321 residues: uncharacterized protein (321 aa).

A run of 10 helical transmembrane segments spans residues 6–26, 37–57, 72–92, 100–120, 134–154, 160–180, 196–216, 223–243, 255–275, and 277–297; these read LFIG…MFPV, FYFS…LLLV, WIIL…FLGQ, IMTA…ILWG, ILIA…SFFF, LFSI…TMGG, CLFG…QGYV, VIAA…IIAL, SING…IMVI, and GYNI…GLIL. 2 consecutive EamA domains span residues 18 to 146 and 175 to 300; these read MSWG…MVIT and VYTM…LNNI.

The protein belongs to the EamA transporter family.

It localises to the cell membrane. This is an uncharacterized protein from Bacillus subtilis (strain 168).